The chain runs to 413 residues: Aspartate aminotransferase, cytoplasmic (413 aa).

Residues G39 and W141 each contribute to the L-aspartate site. Residue S149 is modified to Phosphoserine. N195 lines the L-aspartate pocket. K259 carries the N6-(pyridoxal phosphate)lysine modification. R387 serves as a coordination point for L-aspartate.

It belongs to the class-I pyridoxal-phosphate-dependent aminotransferase family. As to quaternary structure, homodimer. The cofactor is pyridoxal 5'-phosphate.

It localises to the cytoplasm. It catalyses the reaction L-aspartate + 2-oxoglutarate = oxaloacetate + L-glutamate. It carries out the reaction L-cysteine + 2-oxoglutarate = 2-oxo-3-sulfanylpropanoate + L-glutamate. The enzyme catalyses (2S)-2-aminobutanoate + 2-oxoglutarate = 2-oxobutanoate + L-glutamate. The catalysed reaction is 3-sulfino-L-alanine + 2-oxoglutarate = 3-sulfinopyruvate + L-glutamate. Its function is as follows. Biosynthesis of L-glutamate from L-aspartate or L-cysteine. Important regulator of levels of glutamate, the major excitatory neurotransmitter of the vertebrate central nervous system. Acts as a scavenger of glutamate in brain neuroprotection. The aspartate aminotransferase activity is involved in hepatic glucose synthesis during development and in adipocyte glyceroneogenesis. Using L-cysteine as substrate, regulates levels of mercaptopyruvate, an important source of hydrogen sulfide. Mercaptopyruvate is converted into H(2)S via the action of 3-mercaptopyruvate sulfurtransferase (3MST). Hydrogen sulfide is an important synaptic modulator and neuroprotectant in the brain. The protein is Aspartate aminotransferase, cytoplasmic of Pongo abelii (Sumatran orangutan).